A 71-amino-acid chain; its full sequence is Large ribosomal subunit protein uL29 (71 aa).

A disordered region spans residues 1 to 20 (MKARELQELRQGSSPQDLQE).

The protein belongs to the universal ribosomal protein uL29 family.

The polypeptide is Large ribosomal subunit protein uL29 (Clostridium kluyveri (strain ATCC 8527 / DSM 555 / NBRC 12016 / NCIMB 10680 / K1)).